Consider the following 77-residue polypeptide: MIYKVLYQKDKIVNPRRETTQTLYMEADNIVQARALVEQNTPYNIELIQELTGNSLKYEQEHADFKLTAFGQTNSED.

The protein belongs to the RNA polymerase subunit epsilon family. In terms of assembly, RNAP is composed of a core of 2 alpha, a beta and a beta' subunit. The core is associated with a delta subunit, and at least one of epsilon or omega. When a sigma factor is associated with the core the holoenzyme is formed, which can initiate transcription.

The enzyme catalyses RNA(n) + a ribonucleoside 5'-triphosphate = RNA(n+1) + diphosphate. A non-essential component of RNA polymerase (RNAP). The chain is DNA-directed RNA polymerase subunit epsilon from Lactobacillus delbrueckii subsp. bulgaricus (strain ATCC 11842 / DSM 20081 / BCRC 10696 / JCM 1002 / NBRC 13953 / NCIMB 11778 / NCTC 12712 / WDCM 00102 / Lb 14).